Consider the following 378-residue polypeptide: UDP-N-acetylglucosamine--N-acetylmuramyl-(pentapeptide) pyrophosphoryl-undecaprenol N-acetylglucosamine transferase (378 aa).

Residues 14–16 (TGG), asparagine 125, arginine 165, serine 193, and glutamine 293 contribute to the UDP-N-acetyl-alpha-D-glucosamine site.

It belongs to the glycosyltransferase 28 family. MurG subfamily.

The protein resides in the cell inner membrane. It carries out the reaction di-trans,octa-cis-undecaprenyl diphospho-N-acetyl-alpha-D-muramoyl-L-alanyl-D-glutamyl-meso-2,6-diaminopimeloyl-D-alanyl-D-alanine + UDP-N-acetyl-alpha-D-glucosamine = di-trans,octa-cis-undecaprenyl diphospho-[N-acetyl-alpha-D-glucosaminyl-(1-&gt;4)]-N-acetyl-alpha-D-muramoyl-L-alanyl-D-glutamyl-meso-2,6-diaminopimeloyl-D-alanyl-D-alanine + UDP + H(+). It functions in the pathway cell wall biogenesis; peptidoglycan biosynthesis. Cell wall formation. Catalyzes the transfer of a GlcNAc subunit on undecaprenyl-pyrophosphoryl-MurNAc-pentapeptide (lipid intermediate I) to form undecaprenyl-pyrophosphoryl-MurNAc-(pentapeptide)GlcNAc (lipid intermediate II). The sequence is that of UDP-N-acetylglucosamine--N-acetylmuramyl-(pentapeptide) pyrophosphoryl-undecaprenol N-acetylglucosamine transferase from Bartonella henselae (strain ATCC 49882 / DSM 28221 / CCUG 30454 / Houston 1) (Rochalimaea henselae).